The primary structure comprises 496 residues: Glycine receptor subunit beta (496 aa).

Positions methionine 1 to serine 22 are cleaved as a signal peptide. Topologically, residues lysine 23–phenylalanine 268 are extracellular. Residue asparagine 54 is glycosylated (N-linked (GlcNAc...) asparagine). Positions 108 and 174 each coordinate glycine. A disulfide bridge links cysteine 183 with cysteine 197. Residue asparagine 242 is glycosylated (N-linked (GlcNAc...) asparagine). Cysteine 243 and cysteine 255 are oxidised to a cystine. Threonine 250 contacts glycine. The helical transmembrane segment at tyrosine 269–tryptophan 289 threads the bilayer. Over isoleucine 290–alanine 294 the chain is Cytoplasmic. A helical membrane pass occupies residues serine 295–threonine 315. The Extracellular segment spans residues leucine 316–lysine 327. Residues alanine 328 to valine 349 form a helical membrane-spanning segment. Topologically, residues valine 350 to arginine 471 are cytoplasmic. Threonine 391 is modified (phosphothreonine). A helical transmembrane segment spans residues isoleucine 472–tyrosine 495. Position 496 (leucine 496) is a topological domain, extracellular.

It belongs to the ligand-gated ion channel (TC 1.A.9) family. Glycine receptor (TC 1.A.9.3) subfamily. GLRB sub-subfamily. In terms of assembly, forms heteropentamers with glycin receptor alpha subunits. Heteropentamers with GLRA1 can be composed of two GLRA1 and three GLRB subunits, or three GLRA1 and two GLRB subunits, or four GLRA1 subunits and one GLRB subunit. Forms heteropentamers with GLRA2. Functional GLRB-GLRA2 heteropentamers contain four GLRA2 subunits and one GLRB subunit, although alternative subunit composition cannot be excluded. Forms a heteropentamer with GLRA3. Interacts with GPHN. Detected in spinal cord and brain stem (at protein level). Detected in spinal cord, cerebellum and brain cortex.

The protein resides in the postsynaptic cell membrane. It is found in the cell membrane. The protein localises to the synapse. Its subcellular location is the perikaryon. It localises to the cell projection. The protein resides in the dendrite. It is found in the cytoplasm. It catalyses the reaction chloride(in) = chloride(out). With respect to regulation, channel opening is triggered by extracellular glycine. Heteropentameric channels composed of GLRB and GLRA1 are activated by lower glycine levels than homopentameric GLRA1. Its function is as follows. Subunit of heteromeric glycine-gated chloride channels. Plays an important role in the down-regulation of neuronal excitability. Contributes to the generation of inhibitory postsynaptic currents. In Rattus norvegicus (Rat), this protein is Glycine receptor subunit beta (Glrb).